The sequence spans 512 residues: Alanine--glyoxylate aminotransferase 2, mitochondrial (512 aa).

The N-terminal 39 residues, 1–39 (MSLAWRTLQKAFYLETSLRILQMRPSLSCASRIYVPKLT), are a transit peptide targeting the mitochondrion. Lysine 55 is subject to N6-acetyllysine. Lysine 69 carries the post-translational modification N6-acetyllysine; alternate. Residue lysine 69 is modified to N6-succinyllysine; alternate. Lysine 82 carries the post-translational modification N6-acetyllysine. Lysine 260 bears the N6-acetyllysine; alternate mark. Lysine 260 carries the N6-succinyllysine; alternate modification. Position 302 is an N6-succinyllysine (lysine 302). At lysine 348 the chain carries N6-(pyridoxal phosphate)lysine. 2 positions are modified to N6-acetyllysine; alternate: lysine 415 and lysine 418. An N6-succinyllysine; alternate mark is found at lysine 415 and lysine 418. Residue lysine 452 is modified to N6-acetyllysine.

The protein belongs to the class-III pyridoxal-phosphate-dependent aminotransferase family. Homotetramer. Pyridoxal 5'-phosphate serves as cofactor. As to expression, expressed in the liver, lung and kidney.

It is found in the mitochondrion. It carries out the reaction glyoxylate + L-alanine = glycine + pyruvate. It catalyses the reaction (R)-3-amino-2-methylpropanoate + pyruvate = 2-methyl-3-oxopropanoate + L-alanine. The catalysed reaction is 3-oxopropanoate + L-alanine = beta-alanine + pyruvate. The enzyme catalyses 2-oxobutanoate + L-alanine = (2S)-2-aminobutanoate + pyruvate. It carries out the reaction N(omega),N(omega)-dimethyl-L-arginine + pyruvate = 5-(3,3-dimethylguanidino)-2-oxopentanoate + L-alanine. It catalyses the reaction N(omega),N('omega)-dimethyl-L-arginine + pyruvate = 5-(3,3'-dimethylguanidino)-2-oxopentanoate + L-alanine. The catalysed reaction is N(omega),N(omega)-dimethyl-L-arginine + glyoxylate = 5-(3,3-dimethylguanidino)-2-oxopentanoate + glycine. The enzyme catalyses N(omega),N('omega)-dimethyl-L-arginine + glyoxylate = 5-(3,3'-dimethylguanidino)-2-oxopentanoate + glycine. It carries out the reaction N(omega)-methyl-L-arginine + pyruvate = 5-(3-methylguanidino)-2-oxopentanoate + L-alanine. It catalyses the reaction N(omega)-methyl-L-arginine + glyoxylate = 5-(3-methylguanidino)-2-oxopentanoate + glycine. The catalysed reaction is L-ornithine + pyruvate = 5-amino-2-oxopentanoate + L-alanine. The enzyme catalyses L-ornithine + glyoxylate = 5-amino-2-oxopentanoate + glycine. It carries out the reaction (2S)-2-aminobutanoate + glyoxylate = 2-oxobutanoate + glycine. It catalyses the reaction N(omega),N(omega)-dimethyl-L-arginine + oxaloacetate = 5-(3,3-dimethylguanidino)-2-oxopentanoate + L-aspartate. The catalysed reaction is oxaloacetate + L-alanine = L-aspartate + pyruvate. The enzyme catalyses N(omega),N(omega)-dimethyl-L-arginine + 2-oxobutanoate = 5-(3,3-dimethylguanidino)-2-oxopentanoate + (2S)-2-aminobutanoate. It carries out the reaction 2-oxopentanoate + N(omega),N(omega)-dimethyl-L-arginine = 5-(3,3-dimethylguanidino)-2-oxopentanoate + L-2-aminopentanoate. It catalyses the reaction 2-oxohexanoate + N(omega),N(omega)-dimethyl-L-arginine = L-2-aminohexanoate + 5-(3,3-dimethylguanidino)-2-oxopentanoate. Inhibited by 5-fluorouracil and 6-fluorouracil. Inhibited by phenylhydrazine, hydroxylamine, l-amino-L-proline, para-chloromercuribenzoate and HgCl2. Functionally, multifunctional aminotransferase with a broad substrate specificity. Catalyzes the conversion of glyoxylate to glycine using alanine as the amino donor. Catalyzes metabolism of not L- but the D-isomer of D-beta-aminoisobutyric acid to generate 2-methyl-3-oxopropanoate and alanine. Catalyzes the transfer of the amino group from beta-alanine to pyruvate to yield L-alanine and 3-oxopropanoate. Can metabolize NG-monomethyl-L-arginine (NMMA), asymmetric NG,NG-dimethyl-L-arginine (ADMA) and symmetric NG,N'G-dimethyl-L-arginine (SDMA). ADMA is a potent inhibitor of nitric-oxide (NO) synthase, and this activity provides mechanism through which the kidney regulates blood pressure. The polypeptide is Alanine--glyoxylate aminotransferase 2, mitochondrial (Agxt2) (Rattus norvegicus (Rat)).